Reading from the N-terminus, the 67-residue chain is Large ribosomal subunit protein uL29 (67 aa).

Belongs to the universal ribosomal protein uL29 family.

This is Large ribosomal subunit protein uL29 (rpmC) from Thermus thermophilus.